The primary structure comprises 173 residues: Peptide deformylase (173 aa).

Residues Cys98 and His140 each coordinate Fe cation. Glu141 is an active-site residue. Position 144 (His144) interacts with Fe cation.

The protein belongs to the polypeptide deformylase family. Requires Fe(2+) as cofactor.

It carries out the reaction N-terminal N-formyl-L-methionyl-[peptide] + H2O = N-terminal L-methionyl-[peptide] + formate. In terms of biological role, removes the formyl group from the N-terminal Met of newly synthesized proteins. Requires at least a dipeptide for an efficient rate of reaction. N-terminal L-methionine is a prerequisite for activity but the enzyme has broad specificity at other positions. The protein is Peptide deformylase of Caulobacter sp. (strain K31).